The sequence spans 639 residues: Chaperone protein DnaK (639 aa).

Residue Thr-195 is modified to Phosphothreonine; by autocatalysis. A compositionally biased stretch (low complexity) spans 601–618 (NAAAGAAPAGEPAPGEPQ). The tract at residues 601–639 (NAAAGAAPAGEPAPGEPQAEQKKDDGVIDAEYVDVDEKK) is disordered. Residues 627–639 (VIDAEYVDVDEKK) show a composition bias toward acidic residues.

Belongs to the heat shock protein 70 family.

Its function is as follows. Acts as a chaperone. This is Chaperone protein DnaK from Acidobacterium capsulatum (strain ATCC 51196 / DSM 11244 / BCRC 80197 / JCM 7670 / NBRC 15755 / NCIMB 13165 / 161).